The primary structure comprises 176 residues: RNA 2',3'-cyclic phosphodiesterase (176 aa).

The active-site Proton donor is the histidine 43. Short sequence motifs (HXTX) lie at residues 43–46 and 125–128; these read HLTL and HITL. The active-site Proton acceptor is the histidine 125.

Belongs to the 2H phosphoesterase superfamily. ThpR family. In terms of assembly, monomer.

It carries out the reaction a 3'-end 2',3'-cyclophospho-ribonucleotide-RNA + H2O = a 3'-end 2'-phospho-ribonucleotide-RNA + H(+). Hydrolyzes RNA 2',3'-cyclic phosphodiester to an RNA 2'-phosphomonoester. In vitro, can also ligate 5' and 3' half-tRNA molecules with 2',3'-cyclic phosphate and 5'-hydroxyl termini, respectively, to the product containing the 2'-5' phosphodiester linkage. This reaction does not require ATP and is reversible. The protein is RNA 2',3'-cyclic phosphodiesterase of Escherichia coli (strain K12).